We begin with the raw amino-acid sequence, 161 residues long: DNA-directed RNA polymerase III subunit RPC9 (161 aa).

The interval 75-96 (QEDEGEERESSGAKDAEKSGIS) is disordered. Positions 82 to 96 (RESSGAKDAEKSGIS) are enriched in basic and acidic residues.

Belongs to the eukaryotic RPC9 RNA polymerase subunit family. Component of the RNA polymerase III (Pol III) complex consisting of 17 subunits. Forms a Pol III subcomplex with RPC25/RPC8. Interacts with BURF1/TDS4.

It localises to the nucleus. DNA-dependent RNA polymerase catalyzes the transcription of DNA into RNA using the four ribonucleoside triphosphates as substrates. Specific peripheric component of RNA polymerase III which synthesizes small RNAs, such as 5S rRNA and tRNAs. The RPC25/RPC8-RPC17/RPC9 subcomplex may bind Pol III transcripts emerging from the adjacent exit pore during elongation. In Saccharomyces cerevisiae (strain ATCC 204508 / S288c) (Baker's yeast), this protein is DNA-directed RNA polymerase III subunit RPC9 (RPC17).